Reading from the N-terminus, the 393-residue chain is 1-deoxy-D-xylulose 5-phosphate reductoisomerase (393 aa).

NADPH contacts are provided by Thr13, Gly14, Ser15, Ile16, and Asn128. Lys129 serves as a coordination point for 1-deoxy-D-xylulose 5-phosphate. Glu130 contributes to the NADPH binding site. Position 154 (Asp154) interacts with Mn(2+). 1-deoxy-D-xylulose 5-phosphate-binding residues include Ser155, Glu156, Ser178, and His201. Glu156 is a binding site for Mn(2+). Gly207 is a binding site for NADPH. 1-deoxy-D-xylulose 5-phosphate is bound by residues Ser214, Asn219, Lys220, and Glu223. Glu223 contributes to the Mn(2+) binding site.

It belongs to the DXR family. Requires Mg(2+) as cofactor. Mn(2+) is required as a cofactor.

The enzyme catalyses 2-C-methyl-D-erythritol 4-phosphate + NADP(+) = 1-deoxy-D-xylulose 5-phosphate + NADPH + H(+). Its pathway is isoprenoid biosynthesis; isopentenyl diphosphate biosynthesis via DXP pathway; isopentenyl diphosphate from 1-deoxy-D-xylulose 5-phosphate: step 1/6. Functionally, catalyzes the NADPH-dependent rearrangement and reduction of 1-deoxy-D-xylulose-5-phosphate (DXP) to 2-C-methyl-D-erythritol 4-phosphate (MEP). In Acidithiobacillus ferrooxidans (strain ATCC 23270 / DSM 14882 / CIP 104768 / NCIMB 8455) (Ferrobacillus ferrooxidans (strain ATCC 23270)), this protein is 1-deoxy-D-xylulose 5-phosphate reductoisomerase.